A 345-amino-acid chain; its full sequence is Phosphate acyltransferase (345 aa).

Belongs to the PlsX family. In terms of assembly, homodimer. Probably interacts with PlsY.

It is found in the cytoplasm. It catalyses the reaction a fatty acyl-[ACP] + phosphate = an acyl phosphate + holo-[ACP]. The protein operates within lipid metabolism; phospholipid metabolism. Its function is as follows. Catalyzes the reversible formation of acyl-phosphate (acyl-PO(4)) from acyl-[acyl-carrier-protein] (acyl-ACP). This enzyme utilizes acyl-ACP as fatty acyl donor, but not acyl-CoA. This is Phosphate acyltransferase from Chromobacterium violaceum (strain ATCC 12472 / DSM 30191 / JCM 1249 / CCUG 213 / NBRC 12614 / NCIMB 9131 / NCTC 9757 / MK).